The sequence spans 457 residues: Siroheme synthase (457 aa).

A precorrin-2 dehydrogenase /sirohydrochlorin ferrochelatase region spans residues 1-204 (MDHLPIFCQL…NDQKAITETT (204 aa)). NAD(+) contacts are provided by residues 22-23 (DV) and 43-44 (LA). Ser-128 bears the Phosphoserine mark. The tract at residues 216 to 457 (GEVVLVGAGP…RDKLNWFSNH (242 aa)) is uroporphyrinogen-III C-methyltransferase. Residue Pro-225 coordinates S-adenosyl-L-methionine. The active-site Proton acceptor is Asp-248. Catalysis depends on Lys-270, which acts as the Proton donor. Residues 301–303 (GGD), Ile-306, 331–332 (TA), Met-382, and Gly-411 each bind S-adenosyl-L-methionine.

It in the N-terminal section; belongs to the precorrin-2 dehydrogenase / sirohydrochlorin ferrochelatase family. The protein in the C-terminal section; belongs to the precorrin methyltransferase family.

It catalyses the reaction uroporphyrinogen III + 2 S-adenosyl-L-methionine = precorrin-2 + 2 S-adenosyl-L-homocysteine + H(+). The catalysed reaction is precorrin-2 + NAD(+) = sirohydrochlorin + NADH + 2 H(+). It carries out the reaction siroheme + 2 H(+) = sirohydrochlorin + Fe(2+). Its pathway is cofactor biosynthesis; adenosylcobalamin biosynthesis; precorrin-2 from uroporphyrinogen III: step 1/1. It functions in the pathway cofactor biosynthesis; adenosylcobalamin biosynthesis; sirohydrochlorin from precorrin-2: step 1/1. It participates in porphyrin-containing compound metabolism; siroheme biosynthesis; precorrin-2 from uroporphyrinogen III: step 1/1. The protein operates within porphyrin-containing compound metabolism; siroheme biosynthesis; siroheme from sirohydrochlorin: step 1/1. Its pathway is porphyrin-containing compound metabolism; siroheme biosynthesis; sirohydrochlorin from precorrin-2: step 1/1. Its function is as follows. Multifunctional enzyme that catalyzes the SAM-dependent methylations of uroporphyrinogen III at position C-2 and C-7 to form precorrin-2 via precorrin-1. Then it catalyzes the NAD-dependent ring dehydrogenation of precorrin-2 to yield sirohydrochlorin. Finally, it catalyzes the ferrochelation of sirohydrochlorin to yield siroheme. The polypeptide is Siroheme synthase (Escherichia coli O45:K1 (strain S88 / ExPEC)).